The sequence spans 147 residues: uncharacterized protein (147 aa).

One can recognise a Response regulatory domain in the interval 1 to 59; it reads MGAELVKWVKSHKIDAHIITFVAKMPYIDSIKLLEAGAKGCVWKTSHPAKLNRAIDSIS. In terms of domain architecture, HTH luxR-type spans 78–143; the sequence is RYSSDNQLTN…ELIKTALRMG (66 aa). Residues 102–121 constitute a DNA-binding region (H-T-H motif); sequence NKEIANFLQLSRKTVETHRL.

Post-translationally, overexpressed protein is phosphorylated in vitro by non-cognate histidine kinases BarA and UhpB.

This is an uncharacterized protein from Escherichia coli (strain K12).